Consider the following 206-residue polypeptide: Thymidylate kinase (206 aa).

7–14 (GGEGSGKS) provides a ligand contact to ATP.

Belongs to the thymidylate kinase family.

It catalyses the reaction dTMP + ATP = dTDP + ADP. Functionally, phosphorylation of dTMP to form dTDP in both de novo and salvage pathways of dTTP synthesis. The chain is Thymidylate kinase (tmk) from Chlamydia pneumoniae (Chlamydophila pneumoniae).